Here is a 431-residue protein sequence, read N- to C-terminus: Magnetosome protein MamH (431 aa).

A run of 11 helical transmembrane segments spans residues 21-41 (LLSA…PLFL), 57-77 (ANVQ…LGYL), 86-106 (IIVA…LSPW), 107-127 (IGGA…IMSA), 156-176 (TAFM…QIPA), 178-198 (AGIA…AWLA), 243-263 (MVFV…LIKV), 274-294 (ILIG…RSFI), 302-321 (AVLL…GFII), 358-378 (LLGS…IFFV), and 380-400 (VGGF…TGVG).

Belongs to the major facilitator superfamily.

It localises to the magnetosome membrane. Required for correct biomineralization of the magnetosome; probably transports some form of iron. Partially functionally redundant with MamZ. The polypeptide is Magnetosome protein MamH (mamH) (Paramagnetospirillum magneticum (strain ATCC 700264 / AMB-1) (Magnetospirillum magneticum)).